Here is a 1008-residue protein sequence, read N- to C-terminus: Phytosulfokine receptor 1 (1008 aa).

The N-terminal stretch at 1–25 (MRVHRFCVIVIFLTELLCFFYSSES) is a signal peptide. Residues N55, N64, and N73 are each glycosylated (N-linked (GlcNAc...) asparagine). 12 LRR repeats span residues 75–98 (TGRVIRLELGNKKLSGKLSESLGK), 99–123 (LDEIRVLNLSRNFIKDSIPLSIFNL), 124–148 (KNLQTLDLSSNDLSGGIPTSINLPA), 150–170 (QSFDLSSNKFNGSLPSHICHN), 172–194 (TQIRVVKLAVNYFAGNFTSGFGK), 195–219 (CVLLEHLCLGMNDLTGNIPEDLFHL), 221–243 (RLNLLGIQENRLSGSLSREIRNL), 244–266 (SSLVRLDVSWNLFSGEIPDVFDE), 291–315 (SPSLNLLNLRNNSLSGRLMLNCTAM), 316–339 (IALNSLDLGTNRFNGRLPENLPDC), 341–362 (RLKNVNLARNTFHGQVPESFKN), and 363–387 (FESLSYFSLSNSSLANISSALGILQ). N106 is a glycosylation site (N-linked (GlcNAc...) asparagine). Residues N160, N170, and N187 are each glycosylated (N-linked (GlcNAc...) asparagine). Residue N242 is glycosylated (N-linked (GlcNAc...) asparagine). Phytosulfokine is bound at residue R300. Residues N301 and N311 are each glycosylated (N-linked (GlcNAc...) asparagine). 3 residues coordinate phytosulfokine: N346, S370, and S372. Residues N373, N378, and N391 are each glycosylated (N-linked (GlcNAc...) asparagine). 4 LRR repeats span residues 392–414 (LTTLVLTLNFHGEALPDDSSLHF), 415–438 (EKLKVLVVANCRLTGSMPRWLSSS), 439–464 (NELQLLDLSWNRLTGAIPSWIGDFKA), and 466–486 (FYLDLSNNSFTGEIPKSLTKL). Phytosulfokine-binding residues include T398, N424, and D445. N472 and N493 each carry an N-linked (GlcNAc...) asparagine glycan. K508 provides a ligand contact to phytosulfokine. N-linked (GlcNAc...) asparagine glycans are attached at residues N510 and N534. LRR repeat units lie at residues 521 to 545 (IFGFPPTIELGHNNLSGPIWEEFGN), 546 to 570 (LKKLHVFDLKWNALSGSIPSSLSGM), 571 to 594 (TSLEALDLSNNRLSGSIPVSLQQL), and 596 to 619 (FLSKFSVAYNNLSGVIPSGGQFQT). Residues N606 and N622 are each glycosylated (N-linked (GlcNAc...) asparagine). The chain crosses the membrane as a helical span at residues 660–680 (MAIGIAFGSVFLLTLLSLIVL). At T731 the chain carries Phosphothreonine. The region spanning 734-1005 (FDQANIIGCG…PTTQQLVSWL (272 aa)) is the Protein kinase domain. ATP is bound by residues 740 to 748 (IGCGGFGMV) and K762. 2 positions are modified to phosphotyrosine: Y807 and Y847. The active-site Proton acceptor is D860. Phosphotyrosine is present on Y902.

It belongs to the protein kinase superfamily. Ser/Thr protein kinase family. Homo- and heterodimers with PSY1R. Heterodimers with the somatic embryogenesis receptor-like kinases (SERKs). PSK is not directly involved in PSKR-SERK interaction but stabilizes PSKR island domain for recruitment of a SERK. Part of a functional complex containing PSKR1, BAK1, CNGC17, and AHA. Interacts with AHA1, AHA2, and BAK1, but not with CNGC17 or BRI1. The cofactor is Mg(2+). Requires Mn(2+) as cofactor. In terms of tissue distribution, weakly expressed in roots, leaves, stems and flowers. Expressed in the primary and lateral roots, including root primordia and root tips, but not in the hypocotyl.

Its subcellular location is the cell membrane. The catalysed reaction is L-seryl-[protein] + ATP = O-phospho-L-seryl-[protein] + ADP + H(+). It carries out the reaction L-threonyl-[protein] + ATP = O-phospho-L-threonyl-[protein] + ADP + H(+). The enzyme catalyses GTP = 3',5'-cyclic GMP + diphosphate. Its activity is regulated as follows. cGMP suppresses kinase activity. Functionally, phytosulfokine receptor with both a serine/threonine-protein kinase activity and a guanylate cyclase activity. Regulates, in response to phytosulfokine binding, a signaling cascade involved in plant cell differentiation, organogenesis, somatic embryogenesis, cellular proliferation and plant growth. Involved in plant immunity, with antagonistic effects on bacterial and fungal resistances. Not involved in PSY perception. CNGC17 and AHAs form a functional cation-translocating unit that is activated by PSKR1/BAK1 and possibly other BAK1/RLK complexes. The protein is Phytosulfokine receptor 1 of Arabidopsis thaliana (Mouse-ear cress).